The primary structure comprises 124 residues: Small ribosomal subunit protein uS12 (124 aa).

The interval 1 to 25 (MATINQLVRKPRQATTYKSASPALD) is disordered. Residue Asp89 is modified to 3-methylthioaspartic acid.

This sequence belongs to the universal ribosomal protein uS12 family. In terms of assembly, part of the 30S ribosomal subunit. Contacts proteins S8 and S17. May interact with IF1 in the 30S initiation complex.

Its function is as follows. With S4 and S5 plays an important role in translational accuracy. Interacts with and stabilizes bases of the 16S rRNA that are involved in tRNA selection in the A site and with the mRNA backbone. Located at the interface of the 30S and 50S subunits, it traverses the body of the 30S subunit contacting proteins on the other side and probably holding the rRNA structure together. The combined cluster of proteins S8, S12 and S17 appears to hold together the shoulder and platform of the 30S subunit. The protein is Small ribosomal subunit protein uS12 of Stenotrophomonas maltophilia (strain R551-3).